Consider the following 130-residue polypeptide: Small ribosomal subunit protein uS11c (130 aa).

This sequence belongs to the universal ribosomal protein uS11 family. As to quaternary structure, part of the 30S ribosomal subunit.

It localises to the plastid. It is found in the chloroplast. This Chlorella vulgaris (Green alga) protein is Small ribosomal subunit protein uS11c.